We begin with the raw amino-acid sequence, 106 residues long: MPRTFLVVLIYILAGFLCSTSALRKVNEASGIKTDGSGYTIVEECCTESCKLEEVNEYCHLFRGRFFCGEQILDIYNTVCNPRSIRRKRSLTVDKREAKKFIRQRR.

A signal peptide spans 1–22 (MPRTFLVVLIYILAGFLCSTSA). The propeptide occupies 23-37 (LRKVNEASGIKTDGS). Disulfide bonds link Cys-45–Cys-50, Cys-46–Cys-80, and Cys-59–Cys-68. Residues 86-106 (RRKRSLTVDKREAKKFIRQRR) constitute a propeptide, c peptide.

It belongs to the insulin family.

Its subcellular location is the secreted. In terms of biological role, insulin decreases blood glucose concentration. May have evolved to activate insulin receptors (INSR) in vertebrates. Molecular docking studies reveals unique interaction with the human insulin receptor. In vivo, insulin-like peptide injection reduces blood glucose levels in two models of zebrafish diabetes (streptozotocin- and glucose-induced). Also shorter swimming distance of zebrafish larvae, an effect which is not observed with human insulin. The sequence is that of Insulin-like peptide 04 from Exaiptasia diaphana (Tropical sea anemone).